A 99-amino-acid chain; its full sequence is MTDADMSVLNEVFDVIMDRKNNPVEGSYVCSLLDHRKGINKILEKVGEETAETILAVKDNDRAEIIYETSDLLFHLLVMLAATDITLDDIAEEMKKRRH.

Belongs to the PRA-PH family.

The protein localises to the cytoplasm. It catalyses the reaction 1-(5-phospho-beta-D-ribosyl)-ATP + H2O = 1-(5-phospho-beta-D-ribosyl)-5'-AMP + diphosphate + H(+). Its pathway is amino-acid biosynthesis; L-histidine biosynthesis; L-histidine from 5-phospho-alpha-D-ribose 1-diphosphate: step 2/9. In Methanococcoides burtonii (strain DSM 6242 / NBRC 107633 / OCM 468 / ACE-M), this protein is Phosphoribosyl-ATP pyrophosphatase.